A 470-amino-acid chain; its full sequence is Putative multidrug resistance protein MdtD (470 aa).

At 1-11 (MTELPDNTRWQ) the chain is on the periplasmic side. A helical transmembrane segment spans residues 12–32 (LWIVAFGFFMQSLDTTIVNTA). Topologically, residues 33–48 (LPSMAKSLGESPLHMH) are cytoplasmic. A helical membrane pass occupies residues 49–69 (MVVVSYVLTVAVMLPASGWLA). Residues 70–76 (DKIGVRN) are Periplasmic-facing. A helical membrane pass occupies residues 77–97 (IFFAAIVLFTLGSLFCALSGT). The Cytoplasmic portion of the chain corresponds to 98 to 101 (LNQL). The chain crosses the membrane as a helical span at residues 102 to 124 (VLARVLQGVGGAMMVPVGRLTVM). Residues 125–137 (KIVPRAQYMAAMT) lie on the Periplasmic side of the membrane. The helical transmembrane segment at 138 to 158 (FVTLPGQIGPLLGPALGGVLV) threads the bilayer. The Cytoplasmic portion of the chain corresponds to 159–164 (EYASWH). The helical transmembrane segment at 165–185 (WIFLINIPVGIVGAMATFMLM) threads the bilayer. The Periplasmic portion of the chain corresponds to 186–196 (PNYTIETRRFD). A helical transmembrane segment spans residues 197–217 (LPGFLLLAIGMAVLTLALDGS). Topologically, residues 218 to 224 (KSMGISP) are cytoplasmic. A helical transmembrane segment spans residues 225–245 (WTLAGLAAGGAAAILLYLFHA). At 246-262 (KKNSGALFSLRLFRTPT) the chain is on the periplasmic side. The chain crosses the membrane as a helical span at residues 263–283 (FSLGLLGSFAGRIGSGMLPFM). Over 284–285 (TP) the chain is Cytoplasmic. A helical transmembrane segment spans residues 286–306 (VFLQIGLGFSPFHAGLMMIPM). The Periplasmic portion of the chain corresponds to 307–341 (VLGSMGMKRIVVQIVNRFGYRRVLVATTLGLALVS). Residues 342–362 (LLFMSVALLGWYYLLPLVLLL) traverse the membrane as a helical segment. At 363-395 (QGMVNSARFSSMNTLTLKDLPDTLASSGNSLLS) the chain is on the cytoplasmic side. The chain crosses the membrane as a helical span at residues 396 to 416 (MIMQLSMSIGVTIAGMLLGMF). Over 417 to 430 (GQQHIGIDSSATHH) the chain is Periplasmic. The chain crosses the membrane as a helical span at residues 431-451 (VFMYTWLCMAVIIALPAIIFA). Over 452 to 470 (RVPNDTQQNMVISRRKRSL) the chain is Cytoplasmic.

It belongs to the major facilitator superfamily. TCR/Tet family.

The protein resides in the cell inner membrane. The polypeptide is Putative multidrug resistance protein MdtD (Salmonella agona (strain SL483)).